Reading from the N-terminus, the 362-residue chain is Phospho-N-acetylmuramoyl-pentapeptide-transferase (362 aa).

10 consecutive transmembrane segments (helical) span residues 28–48 (IISF…VITW), 72–92 (TPTM…MVCA), 94–114 (LSNI…ILGL), 131–151 (VLHK…IIFM), 169–189 (FMPQ…VGTS), 200–220 (GLAI…AWIS), 236–256 (FSGE…GFLW), 264–284 (IFMG…IAVL), 290–310 (LLLI…LQVI), and 339–359 (IIVR…ITLK).

This sequence belongs to the glycosyltransferase 4 family. MraY subfamily. The cofactor is Mg(2+).

The protein resides in the cell inner membrane. It catalyses the reaction UDP-N-acetyl-alpha-D-muramoyl-L-alanyl-gamma-D-glutamyl-meso-2,6-diaminopimeloyl-D-alanyl-D-alanine + di-trans,octa-cis-undecaprenyl phosphate = di-trans,octa-cis-undecaprenyl diphospho-N-acetyl-alpha-D-muramoyl-L-alanyl-D-glutamyl-meso-2,6-diaminopimeloyl-D-alanyl-D-alanine + UMP. It participates in cell wall biogenesis; peptidoglycan biosynthesis. Its function is as follows. Catalyzes the initial step of the lipid cycle reactions in the biosynthesis of the cell wall peptidoglycan: transfers peptidoglycan precursor phospho-MurNAc-pentapeptide from UDP-MurNAc-pentapeptide onto the lipid carrier undecaprenyl phosphate, yielding undecaprenyl-pyrophosphoryl-MurNAc-pentapeptide, known as lipid I. This chain is Phospho-N-acetylmuramoyl-pentapeptide-transferase, found in Blochmanniella pennsylvanica (strain BPEN).